A 124-amino-acid chain; its full sequence is Small ribosomal subunit protein eS25 (124 aa).

The segment covering 1 to 22 has biased composition (basic and acidic residues); it reads PPKDDKKKKDAGKSAKKDKDPV. A disordered region spans residues 1 to 37; the sequence is PPKDDKKKKDAGKSAKKDKDPVNKSGGKAKKKKWSKG. The segment covering 27 to 37 has biased composition (basic residues); that stretch reads GKAKKKKWSKG. K42 is subject to N6-acetyllysine. At K51 the chain carries N6-acetyllysine; alternate. K51 is modified (N6-succinyllysine; alternate). N6-acetyllysine occurs at positions 59 and 65. N6-acetyllysine; alternate is present on K93. K93 carries the N6-succinyllysine; alternate modification.

It belongs to the eukaryotic ribosomal protein eS25 family. As to quaternary structure, component of the small ribosomal subunit.

It is found in the cytoplasm. Component of the small ribosomal subunit. The ribosome is a large ribonucleoprotein complex responsible for the synthesis of proteins in the cell. This Oryctolagus cuniculus (Rabbit) protein is Small ribosomal subunit protein eS25 (RPS25).